The primary structure comprises 313 residues: Aspartate carbamoyltransferase catalytic subunit (313 aa).

2 residues coordinate carbamoyl phosphate: Arg58 and Thr59. Residue Lys86 participates in L-aspartate binding. Carbamoyl phosphate-binding residues include Arg108, His136, and Gln139. Residues Arg169 and Arg223 each coordinate L-aspartate. Residues Gly265 and Pro266 each contribute to the carbamoyl phosphate site.

It belongs to the aspartate/ornithine carbamoyltransferase superfamily. ATCase family. As to quaternary structure, heterododecamer (2C3:3R2) of six catalytic PyrB chains organized as two trimers (C3), and six regulatory PyrI chains organized as three dimers (R2).

It carries out the reaction carbamoyl phosphate + L-aspartate = N-carbamoyl-L-aspartate + phosphate + H(+). Its pathway is pyrimidine metabolism; UMP biosynthesis via de novo pathway; (S)-dihydroorotate from bicarbonate: step 2/3. Functionally, catalyzes the condensation of carbamoyl phosphate and aspartate to form carbamoyl aspartate and inorganic phosphate, the committed step in the de novo pyrimidine nucleotide biosynthesis pathway. In Anaeromyxobacter dehalogenans (strain 2CP-C), this protein is Aspartate carbamoyltransferase catalytic subunit.